We begin with the raw amino-acid sequence, 61 residues long: Conotoxin TxMRCL-04 (61 aa).

The signal sequence occupies residues 1–22 (MRCLPVFVILLLLIASTPSVDA). The propeptide occupies 23–46 (QLKTKDDMSLASFHDNVKRILQIR).

It belongs to the conotoxin T superfamily. In terms of processing, contains 2 disulfide bonds that can be either 'C1-C3, C2-C4' or 'C1-C4, C2-C3', since these disulfide connectivities have been observed for conotoxins with cysteine framework V (for examples, see AC P0DQQ7 and AC P81755). Expressed by the venom duct.

Its subcellular location is the secreted. In Conus textile (Cloth-of-gold cone), this protein is Conotoxin TxMRCL-04.